We begin with the raw amino-acid sequence, 567 residues long: Monodechloroaminopyrrolnitrin halogenase PrnC (567 aa).

The protein operates within antibiotic biosynthesis. In terms of biological role, involved in the biosynthesis of the antifungal antibiotic pyrrolnitrin. Catalyzes the chlorination of monodechloroaminopyrrolnitrin (MDA) at the 3 position to form aminopyrrolnitrin (APRN). The chain is Monodechloroaminopyrrolnitrin halogenase PrnC (prnC) from Pseudomonas fluorescens.